A 423-amino-acid chain; its full sequence is Aspartate aminotransferase, mitochondrial (423 aa).

The transit peptide at 1-22 (MALLQSRLLLSAPRRAAATARA) directs the protein to the mitochondrion. Substrate is bound by residues Gly58, Trp155, and Asn208. Lys272 carries the N6-(pyridoxal phosphate)lysine modification. Position 400 (Arg400) interacts with substrate.

It belongs to the class-I pyridoxal-phosphate-dependent aminotransferase family. Homodimer. The cofactor is pyridoxal 5'-phosphate. Detected in heart (at protein level).

It localises to the mitochondrion matrix. The catalysed reaction is L-aspartate + 2-oxoglutarate = oxaloacetate + L-glutamate. The enzyme catalyses L-kynurenine + 2-oxoglutarate = kynurenate + L-glutamate + H2O. Its function is as follows. Catalyzes the irreversible transamination of the L-tryptophan metabolite L-kynurenine to form kynurenic acid (KA). As a member of the malate-aspartate shuttle, it has a key role in the intracellular NAD(H) redox balance. Is important for metabolite exchange between mitochondria and cytosol, and for amino acid metabolism. In Gallus gallus (Chicken), this protein is Aspartate aminotransferase, mitochondrial (GOT2).